Here is a 123-residue protein sequence, read N- to C-terminus: DNA-directed RNA polymerase subunit omega (123 aa).

A disordered region spans residues 72–100; it reads QRVLPSEDEEDAAREERGQQMEALPAPPV.

It belongs to the RNA polymerase subunit omega family. In terms of assembly, the RNAP catalytic core consists of 2 alpha, 1 beta, 1 beta' and 1 omega subunit. When a sigma factor is associated with the core the holoenzyme is formed, which can initiate transcription.

It carries out the reaction RNA(n) + a ribonucleoside 5'-triphosphate = RNA(n+1) + diphosphate. Functionally, promotes RNA polymerase assembly. Latches the N- and C-terminal regions of the beta' subunit thereby facilitating its interaction with the beta and alpha subunits. This is DNA-directed RNA polymerase subunit omega from Maricaulis maris (strain MCS10) (Caulobacter maris).